A 184-amino-acid polypeptide reads, in one-letter code: Probable cobalt-precorrin-6B C(15)-methyltransferase (decarboxylating) (184 aa).

Residues threonine 12, 36 to 40 (GCGTG), aspartate 59, and alanine 87 contribute to the S-adenosyl-L-methionine site.

It belongs to the methyltransferase superfamily. Archaeal-type CbiT family.

The enzyme catalyses Co-precorrin-6B + S-adenosyl-L-methionine = Co-precorrin-7 + S-adenosyl-L-homocysteine + CO2. The protein operates within cofactor biosynthesis; adenosylcobalamin biosynthesis; cob(II)yrinate a,c-diamide from sirohydrochlorin (anaerobic route): step 8/10. In terms of biological role, catalyzes the methylation of C-15 in cobalt-precorrin-6B followed by the decarboxylation of C-12 to form cobalt-precorrin-7. This Methanosarcina acetivorans (strain ATCC 35395 / DSM 2834 / JCM 12185 / C2A) protein is Probable cobalt-precorrin-6B C(15)-methyltransferase (decarboxylating).